A 188-amino-acid polypeptide reads, in one-letter code: Pro-adrenomedullin (188 aa).

Residues 1 to 21 form the signal peptide; that stretch reads MKLVPVALMYLGSLAFLGADT. Arginine 41 carries the arginine amide modification. The propeptide occupies 45-92; the sequence is ELRLSSSYPTGIADLKAGPAQTVIRPQDVKGSSRSPQASIPDAARIRV. Residues cysteine 110 and cysteine 115 are joined by a disulfide bond. A disordered region spans residues 131–177; the sequence is DKDGVAPRSKISPQGYGRRRRRSLPEASLGRTLRSQEPQAHGAPASP. Residue tyrosine 146 is modified to Tyrosine amide. A propeptide spans 153-188 (preproAM C-terminal fragment); sequence SLPEASLGRTLRSQEPQAHGAPASPAHQVLATLFRI.

This sequence belongs to the adrenomedullin family. As to expression, highly expressed in adrenal glands, lung and kidney.

It is found in the secreted. Functionally, adrenomedullin/ADM and proadrenomedullin N-20 terminal peptide/PAMP are peptide hormones that act as potent hypotensive and vasodilatator agents. Numerous actions have been reported most related to the physiologic control of fluid and electrolyte homeostasis. ADM function is mediated by the CALCRL-RAMP2 and CALCRL-RAMP3 receptor complexes with ADM showing the highest potency for the CALCRL-RAMP2 complex. In Sus scrofa (Pig), this protein is Pro-adrenomedullin (ADM).